Consider the following 377-residue polypeptide: uncharacterized protein (377 aa).

The signal sequence occupies residues 1 to 22; the sequence is MKFKYGTVVLGSFLGLSVVLAA. The N-palmitoyl cysteine moiety is linked to residue Cys23. Residue Cys23 is the site of S-diacylglycerol cysteine attachment. Residues 217–260 are disordered; it reads AKANGETNQKGRKAAKSNKTALVQLKNGADTTTNEENKDTKTSD. Residues 251–260 show a composition bias toward basic and acidic residues; sequence EENKDTKTSD.

Belongs to the MG185/MG260 family.

Its subcellular location is the cell membrane. This is an uncharacterized protein from Mycoplasma pneumoniae (strain ATCC 29342 / M129 / Subtype 1) (Mycoplasmoides pneumoniae).